The sequence spans 330 residues: Replication factor C small subunit (330 aa).

48 to 55 (GPPGTGKT) is an ATP binding site.

This sequence belongs to the activator 1 small subunits family. RfcS subfamily. In terms of assembly, heteropentamer composed of four small subunits (RfcS) and one large subunit (RfcL). A homotetramer of this subunit interacts with PCNA heterodimer PCNA1-PCNA2.

Its function is as follows. Part of the RFC clamp loader complex which loads the PCNA sliding clamp onto DNA. The complex possesses DNA-dependent ATPase activity. The protein is Replication factor C small subunit (rfcS) of Saccharolobus solfataricus (strain ATCC 35092 / DSM 1617 / JCM 11322 / P2) (Sulfolobus solfataricus).